The sequence spans 394 residues: Elongation factor Tu (394 aa).

In terms of domain architecture, tr-type G spans 10-205; that stretch reads KPHMNVGTIG…SMDNYFDLPE (196 aa). The tract at residues 19-26 is G1; that stretch reads GHVDHGKT. 19 to 26 serves as a coordination point for GTP; sequence GHVDHGKT. Thr-26 is a Mg(2+) binding site. Positions 61-65 are G2; sequence GITIN. Positions 82 to 85 are G3; it reads DCPG. GTP is bound by residues 82–86 and 137–140; these read DCPGH and NKLD. Residues 137 to 140 form a G4 region; that stretch reads NKLD. The G5 stretch occupies residues 173 to 175; the sequence is SAF.

It belongs to the TRAFAC class translation factor GTPase superfamily. Classic translation factor GTPase family. EF-Tu/EF-1A subfamily. Monomer.

It localises to the cytoplasm. The enzyme catalyses GTP + H2O = GDP + phosphate + H(+). Its function is as follows. GTP hydrolase that promotes the GTP-dependent binding of aminoacyl-tRNA to the A-site of ribosomes during protein biosynthesis. The protein is Elongation factor Tu of Borreliella burgdorferi (strain ATCC 35210 / DSM 4680 / CIP 102532 / B31) (Borrelia burgdorferi).